We begin with the raw amino-acid sequence, 344 residues long: Protein pelota homolog (344 aa).

It belongs to the eukaryotic release factor 1 family. Pelota subfamily. As to quaternary structure, monomer. A divalent metal cation serves as cofactor.

It localises to the cytoplasm. May function in recognizing stalled ribosomes, interact with stem-loop structures in stalled mRNA molecules, and effect endonucleolytic cleavage of the mRNA. May play a role in the release non-functional ribosomes and degradation of damaged mRNAs. Has endoribonuclease activity. This chain is Protein pelota homolog, found in Saccharolobus islandicus (strain M.14.25 / Kamchatka #1) (Sulfolobus islandicus).